Reading from the N-terminus, the 270-residue chain is Phosphonoacetaldehyde hydrolase (270 aa).

Catalysis depends on Asp11, which acts as the Nucleophile. Positions 11 and 13 each coordinate Mg(2+). Lys53 serves as the catalytic Schiff-base intermediate with substrate. Position 187 (Asp187) interacts with Mg(2+).

It belongs to the HAD-like hydrolase superfamily. PhnX family. As to quaternary structure, homodimer. Mg(2+) is required as a cofactor.

The catalysed reaction is phosphonoacetaldehyde + H2O = acetaldehyde + phosphate + H(+). Its function is as follows. Involved in phosphonate degradation. The polypeptide is Phosphonoacetaldehyde hydrolase (Salmonella paratyphi C (strain RKS4594)).